We begin with the raw amino-acid sequence, 236 residues long: Phosphoribosylaminoimidazole-succinocarboxamide synthase (236 aa).

The protein belongs to the SAICAR synthetase family.

It catalyses the reaction 5-amino-1-(5-phospho-D-ribosyl)imidazole-4-carboxylate + L-aspartate + ATP = (2S)-2-[5-amino-1-(5-phospho-beta-D-ribosyl)imidazole-4-carboxamido]succinate + ADP + phosphate + 2 H(+). The protein operates within purine metabolism; IMP biosynthesis via de novo pathway; 5-amino-1-(5-phospho-D-ribosyl)imidazole-4-carboxamide from 5-amino-1-(5-phospho-D-ribosyl)imidazole-4-carboxylate: step 1/2. In Cellvibrio japonicus (strain Ueda107) (Pseudomonas fluorescens subsp. cellulosa), this protein is Phosphoribosylaminoimidazole-succinocarboxamide synthase.